A 160-amino-acid chain; its full sequence is Eukaryotic translation initiation factor 5A (160 aa).

A compositionally biased stretch (basic and acidic residues) spans 1 to 12; it reads MSDEEHHFESKA. The segment at 1-21 is disordered; sequence MSDEEHHFESKADAGASKTFP. Residue lysine 52 is modified to Hypusine.

Belongs to the eIF-5A family. Lys-53 undergoes hypusination, a unique post-translational modification that consists in the addition of a butylamino group from spermidine to lysine side chain, leading to the formation of the unusual amino acid hypusine. eIF-5As are the only known proteins to undergo this modification, which is essential for their function.

Its function is as follows. Translation factor that promotes translation elongation and termination, particularly upon ribosome stalling at specific amino acid sequence contexts. Binds between the exit (E) and peptidyl (P) site of the ribosome and promotes rescue of stalled ribosome: specifically required for efficient translation of polyproline-containing peptides as well as other motifs that stall the ribosome. Acts as a ribosome quality control (RQC) cofactor by joining the RQC complex to facilitate peptidyl transfer during CAT tailing step. The protein is Eukaryotic translation initiation factor 5A of Manihot esculenta (Cassava).